Here is a 423-residue protein sequence, read N- to C-terminus: Putative competence-damage inducible protein (423 aa).

This sequence belongs to the CinA family.

This is Putative competence-damage inducible protein from Streptococcus pyogenes serotype M4 (strain MGAS10750).